Reading from the N-terminus, the 346-residue chain is Biotin synthase (346 aa).

A Radical SAM core domain is found at 38–256 (RQVQVSTLLS…IAVARIMMPT (219 aa)). [4Fe-4S] cluster contacts are provided by C53, C57, and C60. [2Fe-2S] cluster-binding residues include C97, C128, C188, and R260.

This sequence belongs to the radical SAM superfamily. Biotin synthase family. Homodimer. [4Fe-4S] cluster serves as cofactor. The cofactor is [2Fe-2S] cluster.

It carries out the reaction (4R,5S)-dethiobiotin + (sulfur carrier)-SH + 2 reduced [2Fe-2S]-[ferredoxin] + 2 S-adenosyl-L-methionine = (sulfur carrier)-H + biotin + 2 5'-deoxyadenosine + 2 L-methionine + 2 oxidized [2Fe-2S]-[ferredoxin]. The protein operates within cofactor biosynthesis; biotin biosynthesis; biotin from 7,8-diaminononanoate: step 2/2. Catalyzes the conversion of dethiobiotin (DTB) to biotin by the insertion of a sulfur atom into dethiobiotin via a radical-based mechanism. The chain is Biotin synthase from Escherichia coli (strain K12 / DH10B).